Reading from the N-terminus, the 339-residue chain is MKNWINEECNKEDIVINSNISLSRNLKEKPFSNKLNEIEARENVGFIYQIVKSELKDESCIYQLWNEDKELINSYLDKQLISKELIKNKDKTAFVLNSEETLSIMINEDDHLKLRCITAGFDLETAFDNITKLDDKIEKRVHYAFDENLGYLTTSPTNLGTGMRASVNIHLPALNFNDEISNFSKGLTQIGMDMKGLYEEGNKAYGNMYKISNQVTLGLTEEEIIDNLKGAVLNVISEEKKFREVLLTKCKYDIEDKVFRAYGILTSAILLSEKECTELLSSVRFGVELSLLDISKNKLNKLLVYTRDSSLQNYLKRKLSNKELNYERAKFVRAILAQN.

The Phosphagen kinase C-terminal domain occupies Ile14–Phe242. ATP contacts are provided by residues Asn17–Ser21, Arg164–Asn168, and Lys195–Glu200.

This sequence belongs to the ATP:guanido phosphotransferase family.

The catalysed reaction is L-arginyl-[protein] + ATP = N(omega)-phospho-L-arginyl-[protein] + ADP + H(+). Functionally, catalyzes the specific phosphorylation of arginine residues in proteins. The chain is Protein-arginine kinase from Clostridium botulinum (strain Eklund 17B / Type B).